We begin with the raw amino-acid sequence, 120 residues long: Large ribosomal subunit protein uL18 (120 aa).

It belongs to the universal ribosomal protein uL18 family. In terms of assembly, part of the 50S ribosomal subunit; part of the 5S rRNA/L5/L18/L25 subcomplex. Contacts the 5S and 23S rRNAs.

In terms of biological role, this is one of the proteins that bind and probably mediate the attachment of the 5S RNA into the large ribosomal subunit, where it forms part of the central protuberance. The sequence is that of Large ribosomal subunit protein uL18 from Gluconacetobacter diazotrophicus (strain ATCC 49037 / DSM 5601 / CCUG 37298 / CIP 103539 / LMG 7603 / PAl5).